A 378-amino-acid polypeptide reads, in one-letter code: Packaging protein 3 (378 aa).

Disordered stretches follow at residues 1-73 (MHPV…EGPV) and 355-378 (SRPP…DDFI). The tract at residues 1–178 (MHPVLQSVRN…AFGEELRNTC (178 aa)) is interaction with packaging protein 1. Low complexity-rich tracts occupy residues 16–35 (GGPH…SVRR) and 49–58 (PGAGATPTAG). Residue Ser362 is modified to Phosphoserine; by host. Over residues 363–378 (FADEGPSESDDEDDFI) the composition is skewed to acidic residues.

It belongs to the adenoviridae packaging protein 3 family. Part of the genome packaging complex composed of packaging proteins 1, 2 and 3; this complex specifically binds to the packaging sequence on the left end of viral genomic DNA and performs packaging of the viral genome. Interacts with hexon-linking protein IIIa; this interaction is required to promote correct genome packaging. In terms of processing, cleaved at different sites by the viral protease during virion maturation.

It is found in the host nucleus. Involved in viral genome packaging through its interaction with packaging proteins 1 and 2. After proteolytic cleavage by adenovirus protease, L1 52/55k protein is removed from the capsid during viral maturation. The sequence is that of Packaging protein 3 from Galliformes (FAdV-1).